We begin with the raw amino-acid sequence, 506 residues long: MTYLLALDQGTSSSRSIVFDERGHIVAQAQQELPQIYPQPGWVEHDPVDIWRTQIATARQALAQANIGPGDVRALGITNQRETTVLWNRRTGQPVHHAIVWQDRRAEPLCAELREQGHEPMIQERTGLRIDAYFSATKLRWLLDQVPGARAAAEAGELAFGTVDSWLIWQLTGGKVHVTDVSNASRTMLFNVHSNDWDDDLLALLRIPRKLLPRVQPSASDFGATDAALLGGAIPIGGVAGDQQSALFGQACFTAGMAKNTYGTGCFMLMHTGSSFQTSRNGLLTTSAAQIAPRTGAGHGAPEPAFAMEGSVFVGGAVVQWLRDGLRAISSSSEVQSLAESVPDSGGVMMVPAFTGLGAPYWKPDARGTITGLTRGTTIAHIARAALESIAYQSAALLQAMSRDAVAAGGAPVSELRVDGGACVNDLLMQFQADLLGIPVVRPAVIETTALGAAYLAGLSSGVYAGTEALSALWRAERRFLPTLSAARAQECMARWEHAVRQAALD.

Threonine 11 provides a ligand contact to ADP. Threonine 11, serine 12, and serine 13 together coordinate ATP. Sn-glycerol 3-phosphate is bound at residue threonine 11. Arginine 15 is an ADP binding site. Arginine 81, glutamate 82, tyrosine 133, and aspartate 242 together coordinate sn-glycerol 3-phosphate. Glycerol contacts are provided by arginine 81, glutamate 82, tyrosine 133, aspartate 242, and glutamine 243. ADP-binding residues include threonine 264 and glycine 316. ATP-binding residues include threonine 264, glycine 316, glutamine 320, and glycine 421. ADP-binding residues include glycine 421 and asparagine 425.

The protein belongs to the FGGY kinase family.

It carries out the reaction glycerol + ATP = sn-glycerol 3-phosphate + ADP + H(+). It functions in the pathway polyol metabolism; glycerol degradation via glycerol kinase pathway; sn-glycerol 3-phosphate from glycerol: step 1/1. Inhibited by fructose 1,6-bisphosphate (FBP). Its function is as follows. Key enzyme in the regulation of glycerol uptake and metabolism. Catalyzes the phosphorylation of glycerol to yield sn-glycerol 3-phosphate. The chain is Glycerol kinase from Paracidovorax citrulli (strain AAC00-1) (Acidovorax citrulli).